A 140-amino-acid polypeptide reads, in one-letter code: Lymphocyte antigen 6H (140 aa).

Residues M1–G25 form the signal peptide. The UPAR/Ly6 domain maps to L26–G91. Intrachain disulfides connect C28–C52, C31–C40, C45–C73, C77–C104, and C105–C110. N36 carries N-linked (GlcNAc...) asparagine glycosylation.

It is found in the cell membrane. The chain is Lymphocyte antigen 6H (LY6H) from Bos taurus (Bovine).